The sequence spans 619 residues: Replication restart protein PriA (619 aa).

Positions 119 to 285 (LKELQKHSAS…KDKALVRLKG (167 aa)) constitute a Helicase ATP-binding domain. 132–139 (GDTGSGKT) contributes to the ATP binding site. The short motif at 228-231 (DEEH) is the DEAH box element. Positions 336, 339, 345, 348, 363, 366, 376, and 379 each coordinate Zn(2+). Residues 371-532 (PIPKICSACQ…ELYPPFSRLC (162 aa)) form the Helicase C-terminal domain.

This sequence belongs to the helicase family. PriA subfamily. As to quaternary structure, component of the replication restart primosome. It depends on Zn(2+) as a cofactor.

The catalysed reaction is Couples ATP hydrolysis with the unwinding of duplex DNA by translocating in the 3'-5' direction.. It carries out the reaction ATP + H2O = ADP + phosphate + H(+). Initiates the restart of stalled replication forks, which reloads the replicative helicase on sites other than the origin of replication. Recognizes and binds to abandoned replication forks and remodels them to uncover a helicase loading site. Promotes assembly of the primosome at these replication forks. Functionally, important for survival of the bacteria in host cells. The chain is Replication restart protein PriA from Helicobacter pylori (strain ATCC 700392 / 26695) (Campylobacter pylori).